Here is a 529-residue protein sequence, read N- to C-terminus: Probable DNA helicase MPN_340 (529 aa).

The UvrD-like helicase ATP-binding domain maps to 2–285 (EHLNQEQKAA…FYTTQNYRSI (284 aa)). 23-30 (SGAGTGKT) serves as a coordination point for ATP.

This sequence belongs to the helicase family. UvrD subfamily.

The enzyme catalyses Couples ATP hydrolysis with the unwinding of duplex DNA by translocating in the 3'-5' direction.. The catalysed reaction is ATP + H2O = ADP + phosphate + H(+). This is Probable DNA helicase MPN_340 from Mycoplasma pneumoniae (strain ATCC 29342 / M129 / Subtype 1) (Mycoplasmoides pneumoniae).